We begin with the raw amino-acid sequence, 812 residues long: MPEEIISRSINDEMITSYMLYSMSVIVGRAIPDVRDGLKPVQRKILFGMLELGLRHNQSYKKSARIVGEVMGKFHPHGDMAIYDALVRMAQPFSMRYPLIQGQGNFGSIDRDPPAAMRYTEARMQRLAEELLADIDKNTVKMIPNFDGSLIEPEVLPAKAPNLLMNGASGIAVGMMTNIPPHNLSELVEALTALIDNPDATIEELMEYVKGPDFPTGGIIMGRDGIKKMYETGRGRMVVRGVAEIEEAKGGTRIVISEIPYGVSKADLIQQIANVAQNVRDIQVRNVRDESDKRGLRVVIELKRGADPNVVLNLLYKHTQLQTTFGAHMLVIDEKKRPKLMNLKEIFQAFIKHRYEVVKRRTEYELEQASKKAHILEGLTKASRAIDTVVDIIRNSKNIQEASVNLQETLEITPEQSQAILEMRLGKLTALEIDKLVTEYAELVEKIKEYREILSDDKNIYQIIKKELQELEAQYGDARRTKISIDGNTDFNVEDVIPDDEVVVTVTKKGYIKATPLEDYRKQGRGGKGIRGVKTTDADFVTNVVSTTRLSKTVVITSKGKAYFINNYELECTSRSSRGKLLANYVKIEPDETVQAVLSVKREEVANKHLIITTRKGKIKRTPFEAFINSRTSGIKAITLNEGDSVVDAGISTSEEETIIISTRKGMVIRFPISQIRPMGRTAAGVKAMALRGDDEVVSATIVLPVDERYLFTATERGVGKRTPLSEYRPQHRAGMGVKNIYGLERTGYVVGSLVVTNEDEIIVITKNGMSIRIPAADIRPTGRVTKGVKVVELRDDDTVASLAVVVDQAEV.

Residues 31–496 (IPDVRDGLKP…GNTDFNVEDV (466 aa)) form the Topo IIA-type catalytic domain. The active-site O-(5'-phospho-DNA)-tyrosine intermediate is Tyr-119. The GyrA-box motif lies at 523-529 (QGRGGKG).

It belongs to the type II topoisomerase GyrA/ParC subunit family. In terms of assembly, heterotetramer, composed of two GyrA and two GyrB chains. In the heterotetramer, GyrA contains the active site tyrosine that forms a transient covalent intermediate with DNA, while GyrB binds cofactors and catalyzes ATP hydrolysis.

The protein localises to the cytoplasm. It catalyses the reaction ATP-dependent breakage, passage and rejoining of double-stranded DNA.. Functionally, a type II topoisomerase that negatively supercoils closed circular double-stranded (ds) DNA in an ATP-dependent manner to modulate DNA topology and maintain chromosomes in an underwound state. Negative supercoiling favors strand separation, and DNA replication, transcription, recombination and repair, all of which involve strand separation. Also able to catalyze the interconversion of other topological isomers of dsDNA rings, including catenanes and knotted rings. Type II topoisomerases break and join 2 DNA strands simultaneously in an ATP-dependent manner. The sequence is that of DNA gyrase subunit A from Kosmotoga olearia (strain ATCC BAA-1733 / DSM 21960 / TBF 19.5.1).